We begin with the raw amino-acid sequence, 267 residues long: X-box-binding protein 1 (267 aa).

Residues 1-180 lie on the Cytoplasmic side of the membrane; the sequence is MVVVAAAPSA…VQAQLSPPQN (180 aa). The segment at 35-56 is disordered; sequence VPGPRAAGSEASGTPQARKRQR. At serine 61 the chain carries Phosphoserine. The 64-residue stretch at 63–126 folds into the bZIP domain; it reads EEKALRRKLK…HGLVVENQEL (64 aa). The tract at residues 65–87 is basic motif; it reads KALRRKLKNRVAAQTARDRKKAR. The segment at 69-85 is nuclear localization signal (NLS); the sequence is RKLKNRVAAQTARDRKK. Residues 91 to 126 form a leucine-zipper region; that stretch reads LEQQVVDLEEENHKLQLENQLLREKTHGLVVENQEL. Residues 181–198 traverse the membrane as a helical; Signal-anchor for type II membrane protein segment; that stretch reads IFPWTLTLLPLQILSLIS. Residues 199–267 lie on the Lumenal side of the membrane; it reads FWAFWTSWTL…FVLTMYTPSL (69 aa). The segment at 230 to 256 is necessary for the translational pausing of its own mRNA; it reads QKDLVPYQPPFLCQWGPHQPSWKPLMN.

The protein belongs to the bZIP family. Isoform 1 interacts with HM13. Isoform 1 interacts with RNF139; the interaction induces ubiquitination and degradation of isoform 1. Isoform 1 interacts (via luminal domain) with DERL1; the interaction obviates the need for ectodomain shedding prior HM13/SPP-mediated XBP1 isoform 1 cleavage. Isoform 1 interacts with isoform 2; the interaction sequesters isoform 2 from the nucleus and enhances isoform 2 degradation in the cytoplasm. Isoform 1 interacts with HDAC3 and AKT1; the interactions occur in endothelial cell (EC) under disturbed flow. Isoform 1 interacts with the oncoprotein FOS. Isoform 2 interacts with ATF6; the interaction occurs in a ER stress-dependent manner and is required for DNA binding to the unfolded protein response element (UPRE). Isoform 2 interacts with PIK3R1; the interaction is direct and induces translocation of XBP1 isoform 2 into the nucleus and the unfolded protein response (UPR) XBP1-dependent target genes activation in a ER stress- and/or insulin-dependent but PI3K-independent manner. Isoform 2 interacts with SIRT1. Isoform 2 interacts with PIK3R1 and PIK3R2; the interactions are direct and induce translocation of XBP1 isoform 2 into the nucleus and the unfolded protein response (UPR) XBP1-dependent target genes activation in a ER stress- and/or insulin-dependent but PI3K-independent manner. Isoform 2 interacts with FOXO1; the interaction is direct and leads to FOXO1 ubiquitination and degradation via the proteasome pathway in hepatocytes. Acetylated by EP300; acetylation positively regulates the transcriptional activity of XBP1 isoform 2. Isoform 2 is deacetylated by SIRT1; deacetylation negatively regulates the transcriptional activity of XBP1 isoform 2. In terms of processing, ubiquitinated, leading to proteasomal degradation in response to ER stress. Post-translationally, X-box-binding protein 1, cytoplasmic form and luminal form are produced by intramembrane proteolytic cleavage of ER membrane-anchored isoform 1 triggered by HM13/SPP in a DERL1-RNF139-dependent and VCP/p97-independent manner. X-box-binding protein 1, luminal form is ubiquitinated leading to proteasomal degradation. In terms of tissue distribution, isoform 1 and isoform 2 are expressed at higher level in branch curves of vessel walls and in atherosclerotic plaques relative to healthy segments of the same aortas (at protein level). Expressed in skeletal muscles, plasma cells and pancreatic beta cells. Isoform 1 and isoform 2 are expressed in gonadal adipose tissue. Isoform 1 is expressed in inguinal adipose tissue.

It localises to the endoplasmic reticulum. The protein localises to the nucleus. The protein resides in the cytoplasm. Its subcellular location is the endoplasmic reticulum membrane. It is found in the membrane. In terms of biological role, functions as a transcription factor during endoplasmic reticulum stress by regulating the unfolded protein response (UPR). Required for cardiac myogenesis and hepatogenesis during embryonic development and the development of secretory tissues such as exocrine pancreas and salivary gland. Involved in differentiation of B lymphocytes to plasma cells and production of immunoglobulins. Modulates the cellular response to ER stress in a PIK3R-dependent manner. Binds to the cis-acting X box present in the promoter regions of major histocompatibility complex class II genes. Involved in VEGF-induced endothelial cell (EC) proliferation and retinal blood vessel formation during embryonic development but also for angiogenesis in adult tissues under ischemic conditions. Also functions as a major regulator of the UPR in obesity-induced insulin resistance and type 2 diabetes for the management of obesity and diabetes prevention. Its function is as follows. Plays a role in the unconventional cytoplasmic splicing processing of its own mRNA triggered by the endoplasmic reticulum (ER) transmembrane endoribonuclease ERN1: upon ER stress, the emerging XBP1 polypeptide chain, as part of a mRNA-ribosome-nascent chain (R-RNC) complex, cotranslationally recruits its own unprocessed mRNA through transient docking to the ER membrane and translational pausing, therefore facilitating efficient IRE1-mediated XBP1 mRNA isoform 2 production. In endothelial cells (EC), associated with KDR, promotes IRE1-mediated XBP1 mRNA isoform 2 production in a vascular endothelial growth factor (VEGF)-dependent manner, leading to EC proliferation and angiogenesis. Functions as a negative feed-back regulator of the potent transcription factor XBP1 isoform 2 protein levels through proteasome-mediated degradation, thus preventing the constitutive activation of the ER stress response signaling pathway. Inhibits the transactivation activity of XBP1 isoform 2 in myeloma cells. Acts as a weak transcriptional factor. Together with HDAC3, contributes to the activation of NFE2L2-mediated HMOX1 transcription factor gene expression in a PI(3)K/mTORC2/Akt-dependent signaling pathway leading to EC survival under disturbed flow/oxidative stress. Binds to the ER stress response element (ERSE) upon ER stress. Binds to the consensus 5'-GATGACGTG[TG]N(3)[AT]T-3' sequence related to cAMP responsive element (CRE)-like sequences. Binds the Tax-responsive element (TRE) present in the long terminal repeat (LTR) of T-cell leukemia virus type 1 (HTLV-I) and to the TPA response elements (TRE). Associates preferentially to the HDAC3 gene promoter region in a static flow-dependent manner. Binds to the CDH5/VE-cadherin gene promoter region. Functionally, functions as a stress-inducible potent transcriptional activator during endoplasmic reticulum (ER) stress by inducing unfolded protein response (UPR) target genes via binding to the UPR element (UPRE). Up-regulates target genes encoding ER chaperones and ER-associated degradation (ERAD) components to enhance the capacity of productive folding and degradation mechanism, respectively, in order to maintain the homeostasis of the ER under ER stress. Plays a role in the production of immunoglobulins and interleukin-6 in the presence of stimuli required for plasma cell differentiation, and promotes as well membrane phospholipid biosynthesis necessary for ER expansion. Contributes to the VEGF-induced endothelial cell (EC) growth and proliferation in a Akt/GSK-dependent and/or -independent signaling pathway, respectively, leading to beta-catenin nuclear translocation and E2F2 gene expression. Promotes umbilical vein EC apoptosis and atherosclerotisis development in a caspase-dependent signaling pathway, and contributes to VEGF-induced EC proliferation and angiogenesis in adult tissues under ischemic conditions. Involved in the regulation of endostatin-induced autophagy in EC through BECN1 transcriptional activation. Plays a role as an oncogene by promoting tumor progression: stimulates zinc finger protein SNAI1 transcription to induce epithelial-to-mesenchymal (EMT) transition, cell migration and invasion of breast cancer cells. Involved in adipocyte differentiation by regulating lipogenic gene expression during lactation. Plays a role in the survival of both dopaminergic neurons of the substantia nigra pars compacta (SNpc), by maintaining protein homeostasis and of myeloma cells. Increases insulin sensitivity in the liver as a response to a high carbohydrate diet, resulting in improved glucose tolerance. Also improves glucose homeostasis in an ER stress- and/or insulin-independent manner through both binding and proteasome-induced degradation of the transcription factor FOXO1, hence resulting in suppression of gluconeogenic genes expression and in a reduction of blood glucose levels. Controls the induction of de novo fatty acid synthesis in hepatocytes by regulating the expression of a subset of lipogenic genes in an ER stress- and UPR-independent manner. Binds to the 5'-CCACG-3' motif in the PPARG promoter. Associates preferentially to the HDAC3 gene promoter region in a disturbed flow-dependent manner. Binds to the BECN1 gene promoter region. Binds to the CDH5/VE-cadherin gene promoter region. Binds to the ER stress response element (ERSE) upon ER stress. This chain is X-box-binding protein 1, found in Mus musculus (Mouse).